The sequence spans 544 residues: Phosphomannomutase (544 aa).

The active-site Phosphoserine intermediate is the S145. Mg(2+) is bound by residues S145, D297, D299, and D301.

Belongs to the phosphohexose mutase family. Requires Mg(2+) as cofactor.

It catalyses the reaction alpha-D-mannose 1-phosphate = D-mannose 6-phosphate. The polypeptide is Phosphomannomutase (manB) (Mycoplasmoides pirum (Mycoplasma pirum)).